We begin with the raw amino-acid sequence, 152 residues long: 3-hydroxyacyl-[acyl-carrier-protein] dehydratase FabZ (152 aa).

The active site involves H58.

Belongs to the thioester dehydratase family. FabZ subfamily.

Its subcellular location is the cytoplasm. It carries out the reaction a (3R)-hydroxyacyl-[ACP] = a (2E)-enoyl-[ACP] + H2O. In terms of biological role, involved in unsaturated fatty acids biosynthesis. Catalyzes the dehydration of short chain beta-hydroxyacyl-ACPs and long chain saturated and unsaturated beta-hydroxyacyl-ACPs. This chain is 3-hydroxyacyl-[acyl-carrier-protein] dehydratase FabZ, found in Prochlorococcus marinus (strain MIT 9515).